We begin with the raw amino-acid sequence, 101 residues long: Acylphosphatase (101 aa).

Residues 12 to 98 (RVHVFVTGRV…EGLRGFEVKR (87 aa)) form the Acylphosphatase-like domain. Catalysis depends on residues arginine 27 and asparagine 45.

Belongs to the acylphosphatase family.

The enzyme catalyses an acyl phosphate + H2O = a carboxylate + phosphate + H(+). This is Acylphosphatase (acyP) from Trichormus variabilis (strain ATCC 29413 / PCC 7937) (Anabaena variabilis).